Reading from the N-terminus, the 263-residue chain is Proliferating cell nuclear antigen (263 aa).

A DNA-binding region spans residues R61–R80.

It belongs to the PCNA family. In terms of assembly, homotrimer. Interacts with FEN1A. Interacts with POLL. Interacts with RAD/GEN1. Interacts with DJA7 and DJA8. As to expression, expressed in proliferating tissues. Expressed in roots and root apex. Expressed at low levels in young leaves. Not detected in mature leaves. Highly expressed in shoot apical meristem (SAM). Expressed in flag leaves and panicles.

Its subcellular location is the nucleus. In terms of biological role, this protein is an auxiliary protein of DNA polymerase delta and is involved in the control of eukaryotic DNA replication by increasing the polymerase's processibility during elongation of the leading strand. The sequence is that of Proliferating cell nuclear antigen from Oryza sativa subsp. japonica (Rice).